The following is a 263-amino-acid chain: Hydroxyethylthiazole kinase (263 aa).

Residue methionine 45 coordinates substrate. Residues arginine 121 and serine 167 each contribute to the ATP site. Position 194 (glycine 194) interacts with substrate.

The protein belongs to the Thz kinase family. Requires Mg(2+) as cofactor.

It carries out the reaction 5-(2-hydroxyethyl)-4-methylthiazole + ATP = 4-methyl-5-(2-phosphooxyethyl)-thiazole + ADP + H(+). It participates in cofactor biosynthesis; thiamine diphosphate biosynthesis; 4-methyl-5-(2-phosphoethyl)-thiazole from 5-(2-hydroxyethyl)-4-methylthiazole: step 1/1. In terms of biological role, catalyzes the phosphorylation of the hydroxyl group of 4-methyl-5-beta-hydroxyethylthiazole (THZ). The chain is Hydroxyethylthiazole kinase from Vibrio parahaemolyticus serotype O3:K6 (strain RIMD 2210633).